The chain runs to 86 residues: MANIKSSKKHISISEKRRKYNCSKRSMIKTFMKKVLFFIKEKNRIKAIKFFYIFQSLVDRYSLKKIIHINKASRYKSVLMNNIKKI.

Belongs to the bacterial ribosomal protein bS20 family.

In terms of biological role, binds directly to 16S ribosomal RNA. The protein is Small ribosomal subunit protein bS20 of Buchnera aphidicola subsp. Cinara cedri (strain Cc).